A 521-amino-acid polypeptide reads, in one-letter code: 2,3-bisphosphoglycerate-independent phosphoglycerate mutase (521 aa).

Mn(2+) is bound by residues aspartate 18 and serine 68. The active-site Phosphoserine intermediate is serine 68. Substrate-binding positions include histidine 129, arginine 158–aspartate 159, arginine 190, arginine 196, arginine 266–arginine 269, and lysine 343. 5 residues coordinate Mn(2+): aspartate 410, histidine 414, aspartate 451, histidine 452, and histidine 470.

It belongs to the BPG-independent phosphoglycerate mutase family. Monomer. Mn(2+) is required as a cofactor.

The catalysed reaction is (2R)-2-phosphoglycerate = (2R)-3-phosphoglycerate. Its pathway is carbohydrate degradation; glycolysis; pyruvate from D-glyceraldehyde 3-phosphate: step 3/5. Catalyzes the interconversion of 2-phosphoglycerate and 3-phosphoglycerate. The protein is 2,3-bisphosphoglycerate-independent phosphoglycerate mutase of Hydrogenovibrio crunogenus (strain DSM 25203 / XCL-2) (Thiomicrospira crunogena).